The primary structure comprises 306 residues: UDP-N-acetylenolpyruvoylglucosamine reductase (306 aa).

The FAD-binding PCMH-type domain occupies 29–193 (RVGGPADWLF…IRASLRGTPD (165 aa)). R173 is a catalytic residue. The active-site Proton donor is S222. E292 is a catalytic residue.

Belongs to the MurB family. The cofactor is FAD.

The protein localises to the cytoplasm. The catalysed reaction is UDP-N-acetyl-alpha-D-muramate + NADP(+) = UDP-N-acetyl-3-O-(1-carboxyvinyl)-alpha-D-glucosamine + NADPH + H(+). It functions in the pathway cell wall biogenesis; peptidoglycan biosynthesis. Functionally, cell wall formation. In Gluconobacter oxydans (strain 621H) (Gluconobacter suboxydans), this protein is UDP-N-acetylenolpyruvoylglucosamine reductase.